We begin with the raw amino-acid sequence, 393 residues long: FAD-dependent monooxygenase dbaB (393 aa).

Residues 1-23 (MTRTSPTLPVIILGAGMVGLTLA) form the signal peptide. Residues E37 and R107 each coordinate FAD. N128 carries an N-linked (GlcNAc...) asparagine glycan. Y221 is an active-site residue. An N-linked (GlcNAc...) asparagine glycan is attached at N233. D320 serves as a coordination point for FAD.

The protein belongs to the paxM FAD-dependent monooxygenase family. The cofactor is FAD.

It functions in the pathway secondary metabolite biosynthesis. FAD-dependent monooxygenase; part of the gene cluster that mediates the biosynthesis of the antibiotic 2,4-dihydroxy-3-methyl-6-(2-oxopropyl)benzaldehyde (DHMBA) and its derivatives. The direct non-reducing polyketide synthase dbaI product is 2,4-dihydroxy-3-methyl-6-(2-oxopropyl)benzaldehyde (DHMBA), produced by condensation of one acetyl-CoA starter unit with 4 malonyl-CoA units and one methylation step. The FAD-dependent monooxygenase dbaH is responsible for the synthesis of yellow pigments derived from the oxidation of DHMBA. The roles of dbaB, C, E and F have still to be determined. This is FAD-dependent monooxygenase dbaB from Emericella nidulans (strain FGSC A4 / ATCC 38163 / CBS 112.46 / NRRL 194 / M139) (Aspergillus nidulans).